The following is a 294-amino-acid chain: S-adenosylmethionine uptake transporter (294 aa).

10 consecutive transmembrane segments (helical) span residues 8-28, 41-61, 74-91, 98-118, 121-141, 148-168, 177-197, 207-227, 237-257, and 260-280; these read YLTG…NDVI, VAFF…VYYG, ILRG…TYGL, TATV…VFFL, NIIW…VVTL, FNPE…LDII, SMIS…LPVA, FELA…FFLL, ATAP…YFIF, and FPDK…LFII. EamA domains are found at residues 21–141 and 160–280; these read SSSA…VVTL and ISFA…LFII.

This sequence belongs to the drug/metabolite transporter (DMT) superfamily. 10 TMS drug/metabolite exporter (DME) (TC 2.A.7.3) family.

It localises to the cell inner membrane. In terms of biological role, transports S-adenosylmethionine. This is S-adenosylmethionine uptake transporter (sam) from Rickettsia conorii (strain ATCC VR-613 / Malish 7).